Here is a 525-residue protein sequence, read N- to C-terminus: Protein disulfide-isomerase A2 (525 aa).

Positions 1–21 are cleaved as a signal peptide; the sequence is MSRQLLPVLLLLLLRASCPWG. Positions 27–152 constitute a Thioredoxin 1 domain; sequence RSPSEEPPEE…IAEWLRRRVG (126 aa). Residues Cys71 and Cys74 each act as nucleophile in the active site. The cysteines at positions 71 and 74 are disulfide-linked. Residues Asn127 and Asn284 are each glycosylated (N-linked (GlcNAc...) asparagine). The region spanning 367 to 496 is the Thioredoxin 2 domain; that stretch reads VLNGQVKPYL…FSKFLDNGGV (130 aa). Residues Cys418 and Cys421 each act as nucleophile in the active site. A disulfide bridge connects residues Cys418 and Cys421. The interval 492–525 is disordered; that stretch reads DNGGVLPTEEPPEEPAAPFPEPPANSTMGSKEEL. A compositionally biased stretch (pro residues) spans 505 to 514; the sequence is EPAAPFPEPP. N-linked (GlcNAc...) asparagine glycosylation occurs at Asn516. The segment covering 516-525 has biased composition (polar residues); the sequence is NSTMGSKEEL. The Prevents secretion from ER signature appears at 522–525; the sequence is KEEL.

The protein belongs to the protein disulfide isomerase family. Monomer; predominantly as monomer under reducing conditions. Homodimer; disulfide-linked. Part of a large chaperone multiprotein complex comprising DNAJB11, HSP90B1, HSPA5, HYOU, PDIA2, PDIA4, PDIA6, PPIB, SDF2L1, UGGT1 and very small amounts of ERP29, but not, or at very low levels, CALR nor CANX. In terms of processing, the disulfide-linked homodimer exhibits an enhanced chaperone activity. Glycosylated. As to expression, highly expressed in pancreas (at protein level).

Its subcellular location is the endoplasmic reticulum lumen. The enzyme catalyses Catalyzes the rearrangement of -S-S- bonds in proteins.. Functionally, acts as an intracellular estrogen-binding protein. May be involved in modulating cellular levels and biological functions of estrogens in the pancreas. May act as a chaperone that inhibits aggregation of misfolded proteins. The protein is Protein disulfide-isomerase A2 (PDIA2) of Homo sapiens (Human).